Here is a 217-residue protein sequence, read N- to C-terminus: DNA transformation protein TfoX (217 aa).

This sequence belongs to the Sxy/TfoX family.

Its function is as follows. Required for DNA transformation. Positively regulates genes required for DNA transformation (late competence-specific genes) in association with CRP. Required for expression of the late competence-specific gene, com101A. Required for expression of the dprABC operon. The sequence is that of DNA transformation protein TfoX from Haemophilus influenzae (strain ATCC 51907 / DSM 11121 / KW20 / Rd).